The chain runs to 599 residues: Elongation factor 4 (599 aa).

The tr-type G domain maps to 4–186; that stretch reads SKIRNFSIIA…SIVEKVPAPK (183 aa). GTP-binding positions include 16-21 and 133-136; these read DHGKST and NKVD.

It belongs to the TRAFAC class translation factor GTPase superfamily. Classic translation factor GTPase family. LepA subfamily.

It is found in the cell inner membrane. It carries out the reaction GTP + H2O = GDP + phosphate + H(+). Its function is as follows. Required for accurate and efficient protein synthesis under certain stress conditions. May act as a fidelity factor of the translation reaction, by catalyzing a one-codon backward translocation of tRNAs on improperly translocated ribosomes. Back-translocation proceeds from a post-translocation (POST) complex to a pre-translocation (PRE) complex, thus giving elongation factor G a second chance to translocate the tRNAs correctly. Binds to ribosomes in a GTP-dependent manner. This Syntrophotalea carbinolica (strain DSM 2380 / NBRC 103641 / GraBd1) (Pelobacter carbinolicus) protein is Elongation factor 4.